Here is a 254-residue protein sequence, read N- to C-terminus: Small ribosomal subunit protein uS2 (254 aa).

The disordered stretch occupies residues Ala-225–Gln-254. Residues Leu-226–Gln-254 show a composition bias toward basic and acidic residues.

The protein belongs to the universal ribosomal protein uS2 family.

This chain is Small ribosomal subunit protein uS2, found in Cytophaga hutchinsonii (strain ATCC 33406 / DSM 1761 / CIP 103989 / NBRC 15051 / NCIMB 9469 / D465).